We begin with the raw amino-acid sequence, 403 residues long: Serine/threonine transporter SstT (403 aa).

8 helical membrane passes run 11-31 (GNLV…AFIS), 51-71 (AIAP…KEVG), 81-101 (VMYV…SFIF), 138-158 (ALAN…GIPL), 175-195 (AVSY…FGLV), 213-233 (LLGV…PILV), 285-305 (VAIP…VTVL), and 319-339 (FMTA…ASGV).

Belongs to the dicarboxylate/amino acid:cation symporter (DAACS) (TC 2.A.23) family.

The protein localises to the cell inner membrane. It catalyses the reaction L-serine(in) + Na(+)(in) = L-serine(out) + Na(+)(out). It carries out the reaction L-threonine(in) + Na(+)(in) = L-threonine(out) + Na(+)(out). In terms of biological role, involved in the import of serine and threonine into the cell, with the concomitant import of sodium (symport system). The polypeptide is Serine/threonine transporter SstT (Haemophilus ducreyi (strain 35000HP / ATCC 700724)).